The chain runs to 255 residues: Thiazole synthase (255 aa).

The Schiff-base intermediate with DXP role is filled by Lys96. Residues Gly157, 184 to 185 (AG), and 206 to 207 (NT) each bind 1-deoxy-D-xylulose 5-phosphate.

Belongs to the ThiG family. In terms of assembly, homotetramer. Forms heterodimers with either ThiH or ThiS.

The protein resides in the cytoplasm. The enzyme catalyses [ThiS sulfur-carrier protein]-C-terminal-Gly-aminoethanethioate + 2-iminoacetate + 1-deoxy-D-xylulose 5-phosphate = [ThiS sulfur-carrier protein]-C-terminal Gly-Gly + 2-[(2R,5Z)-2-carboxy-4-methylthiazol-5(2H)-ylidene]ethyl phosphate + 2 H2O + H(+). The protein operates within cofactor biosynthesis; thiamine diphosphate biosynthesis. Catalyzes the rearrangement of 1-deoxy-D-xylulose 5-phosphate (DXP) to produce the thiazole phosphate moiety of thiamine. Sulfur is provided by the thiocarboxylate moiety of the carrier protein ThiS. In vitro, sulfur can be provided by H(2)S. The sequence is that of Thiazole synthase from Clostridium acetobutylicum (strain ATCC 824 / DSM 792 / JCM 1419 / IAM 19013 / LMG 5710 / NBRC 13948 / NRRL B-527 / VKM B-1787 / 2291 / W).